The following is a 298-amino-acid chain: Acetylglutamate kinase (298 aa).

Substrate-binding positions include 69 to 70 (GG), Arg-91, and Asn-196.

The protein belongs to the acetylglutamate kinase family. ArgB subfamily.

It is found in the cytoplasm. The enzyme catalyses N-acetyl-L-glutamate + ATP = N-acetyl-L-glutamyl 5-phosphate + ADP. It functions in the pathway amino-acid biosynthesis; L-arginine biosynthesis; N(2)-acetyl-L-ornithine from L-glutamate: step 2/4. Catalyzes the ATP-dependent phosphorylation of N-acetyl-L-glutamate. The sequence is that of Acetylglutamate kinase from Granulibacter bethesdensis (strain ATCC BAA-1260 / CGDNIH1).